We begin with the raw amino-acid sequence, 339 residues long: MRQKLEEIKNSAINELKASLSKDQLEVIRVKYLGKKGELTQILRGMGALSQEERPIVGKVANEVRSYIEETIKEAFSDIKNKEKSIRLENETIDITMPGKKQEVGKRHPLDLTLESMKDIFISMGFTIEEGPEVELDKYNFEALNIPKNHPARGEQDTFYINDNLVLRTQTSPIQIRTMENQKPPIKMIAPGKVYRSDSVDATHSPIFYQMEGLVVDKGITFSDLKGTLELFAKRMFGDKVKTKFRPHHFPFTEPSAEMDATCFVCNGEGCKVCKGSGWIELLGCGMVHPQVLRNCNIDPEVYSGFAFGFGVDRMVMMKYGIDDIRLLYESDMRFLNQF.

E254 is a binding site for Mg(2+).

It belongs to the class-II aminoacyl-tRNA synthetase family. Phe-tRNA synthetase alpha subunit type 1 subfamily. In terms of assembly, tetramer of two alpha and two beta subunits. Requires Mg(2+) as cofactor.

It is found in the cytoplasm. The enzyme catalyses tRNA(Phe) + L-phenylalanine + ATP = L-phenylalanyl-tRNA(Phe) + AMP + diphosphate + H(+). This is Phenylalanine--tRNA ligase alpha subunit from Clostridium botulinum (strain 657 / Type Ba4).